The primary structure comprises 217 residues: 25 kDa ookinete surface antigen (217 aa).

The N-terminal stretch at 1–16 (MNKLYSLFLFLFIQLS) is a signal peptide. In terms of domain architecture, EGF-like 1; truncated spans 30 to 59 (CKKGFLIQMSGHLECKCENDLVLVNEETCE). 3 consecutive EGF-like domains span residues 61 to 106 (KVLK…NVCI), 106 to 150 (ILNE…NKCS), and 153 to 193 (GETK…STCT). Intrachain disulfides connect Cys-65–Cys-80, Cys-74–Cys-92, Cys-94–Cys-105, Cys-110–Cys-120, Cys-115–Cys-133, Cys-135–Cys-149, Cys-157–Cys-168, Cys-161–Cys-177, and Cys-179–Cys-192. Residue Asn-112 is glycosylated (N-linked (GlcNAc...) asparagine). N-linked (GlcNAc...) asparagine glycans are attached at residues Asn-165 and Asn-187. Residue Ser-196 is the site of GPI-anchor amidated serine attachment. Positions 197-217 (VYNILNLSLIFVLFSVCFFIM) are cleaved as a propeptide — removed in mature form. An N-linked (GlcNAc...) asparagine glycan is attached at Asn-202.

The protein localises to the cell membrane. This is 25 kDa ookinete surface antigen from Plasmodium reichenowi.